The primary structure comprises 943 residues: Translation initiation factor IF-2 (943 aa).

Residues 29–357 (LSVKSHSSSV…KPVTERKFHE (329 aa)) are disordered. 5 stretches are compositionally biased toward basic and acidic residues: residues 69–82 (PKEEKVEPKVDKAS), 112–137 (FKAEREARAKAEAERRKNGGGRDNRN), 145–155 (QGKRHNNDRRN), 163–196 (DHNKGNRDNSTNHDRNFQGKLRNDQNQNNRRDNA), and 224–253 (RQSETRFREEKAAEQRRAKEQEKARKEKQQ). Over residues 254-266 (AEVAVQKAAAETK) the composition is skewed to low complexity. Basic and acidic residues predominate over residues 296–309 (KSRDNRRVNEDGPK). Residues 313 to 332 (NNKWNNQNQVRNQRNSNWNK) are compositionally biased toward low complexity. Positions 445 to 614 (ERAPVVTIMG…LLVAEVEELK (170 aa)) constitute a tr-type G domain. The segment at 454–461 (GHVDHGKT) is G1. GTP is bound at residue 454–461 (GHVDHGKT). Residues 479–483 (GITQH) form a G2 region. A G3 region spans residues 500–503 (DTPG). GTP-binding positions include 500–504 (DTPGH) and 554–557 (NKID). Residues 554-557 (NKID) are G4. Positions 590–592 (SAK) are G5.

It belongs to the TRAFAC class translation factor GTPase superfamily. Classic translation factor GTPase family. IF-2 subfamily.

It localises to the cytoplasm. In terms of biological role, one of the essential components for the initiation of protein synthesis. Protects formylmethionyl-tRNA from spontaneous hydrolysis and promotes its binding to the 30S ribosomal subunits. Also involved in the hydrolysis of GTP during the formation of the 70S ribosomal complex. The protein is Translation initiation factor IF-2 of Streptococcus thermophilus (strain CNRZ 1066).